A 348-amino-acid polypeptide reads, in one-letter code: Killer cell immunoglobulin-like receptor 2DL1 (348 aa).

An N-terminal signal peptide occupies residues methionine 1–proline 21. At histidine 22–histidine 245 the chain is on the extracellular side. Ig-like C2-type domains follow at residues glutamate 42–serine 107 and glycine 142–serine 205. An intrachain disulfide couples cysteine 49 to cysteine 100. N-linked (GlcNAc...) asparagine glycans are attached at residues asparagine 67, asparagine 84, asparagine 144, and asparagine 178. Cysteine 149 and cysteine 198 form a disulfide bridge. Positions valine 220 to glycine 239 are disordered. Residues isoleucine 246–leucine 264 form a helical membrane-spanning segment. At histidine 265–proline 348 the chain is on the cytoplasmic side.

This sequence belongs to the immunoglobulin superfamily. As to quaternary structure, interacts with ARRB2. Interacts with PTPN6; the interaction is enhanced by ARRB2. Interacts with PTPN11; the interaction is enhanced by ARRB2. In terms of tissue distribution, expressed by NK cells.

The protein localises to the cell membrane. Receptor on natural killer (NK) cells for some HLA-C alleles such as w4 and w6. Inhibits the activity of NK cells thus preventing cell lysis. In Homo sapiens (Human), this protein is Killer cell immunoglobulin-like receptor 2DL1.